The following is a 272-amino-acid chain: Ribosomal RNA small subunit methyltransferase A (272 aa).

Residues N18, L20, G45, E66, D91, and N113 each coordinate S-adenosyl-L-methionine.

It belongs to the class I-like SAM-binding methyltransferase superfamily. rRNA adenine N(6)-methyltransferase family. RsmA subfamily.

Its subcellular location is the cytoplasm. The catalysed reaction is adenosine(1518)/adenosine(1519) in 16S rRNA + 4 S-adenosyl-L-methionine = N(6)-dimethyladenosine(1518)/N(6)-dimethyladenosine(1519) in 16S rRNA + 4 S-adenosyl-L-homocysteine + 4 H(+). Specifically dimethylates two adjacent adenosines (A1518 and A1519) in the loop of a conserved hairpin near the 3'-end of 16S rRNA in the 30S particle. May play a critical role in biogenesis of 30S subunits. The sequence is that of Ribosomal RNA small subunit methyltransferase A from Yersinia pestis bv. Antiqua (strain Antiqua).